The chain runs to 101 residues: Chaperone modulatory protein CbpM (101 aa).

The protein belongs to the CbpM family.

In terms of biological role, interacts with CbpA and inhibits both the DnaJ-like co-chaperone activity and the DNA binding activity of CbpA. Together with CbpA, modulates the activity of the DnaK chaperone system. Does not inhibit the co-chaperone activity of DnaJ. The protein is Chaperone modulatory protein CbpM of Pseudomonas putida (strain GB-1).